A 416-amino-acid polypeptide reads, in one-letter code: UBX domain-containing protein 4 (416 aa).

Residues 273–350 (KAISECLLRV…EFGSKTMLLF (78 aa)) enclose the UBX domain. The tract at residues 376–402 (TRTTPSVNTINKSNPQGPSDNATSIKK) is disordered. Positions 378–402 (TTPSVNTINKSNPQGPSDNATSIKK) are enriched in polar residues.

It is found in the nucleus. The protein localises to the cytoplasm. Functionally, involved in CDC48-dependent protein degradation through the ubiquitin/proteasome pathway. This Saccharomyces cerevisiae (strain ATCC 204508 / S288c) (Baker's yeast) protein is UBX domain-containing protein 4 (UBX4).